A 489-amino-acid chain; its full sequence is GTPase Der (489 aa).

2 EngA-type G domains span residues 30-199 (PVVS…KDKP) and 227-403 (FRLA…SRSH). GTP contacts are provided by residues 36-43 (GRQNVGKS), 85-89 (DTPGL), 151-154 (NKAD), 233-240 (GKPNSGKS), 280-284 (DTAGI), and 345-348 (NKWD). The 85-residue stretch at 404 to 488 (RKVSTSELNK…PIRLEFRSDR (85 aa)) folds into the KH-like domain.

This sequence belongs to the TRAFAC class TrmE-Era-EngA-EngB-Septin-like GTPase superfamily. EngA (Der) GTPase family. Associates with the 50S ribosomal subunit.

GTPase that plays an essential role in the late steps of ribosome biogenesis. In Leptospira interrogans serogroup Icterohaemorrhagiae serovar Lai (strain 56601), this protein is GTPase Der.